The sequence spans 127 residues: Photosystem II reaction center Psb28 protein (127 aa).

Positions 107–127 (GLGYSQNQNSDQTDGDANAEA) are disordered. Residues 109–118 (GYSQNQNSDQ) are compositionally biased toward polar residues.

It belongs to the Psb28 family. As to quaternary structure, part of the photosystem II complex.

Its subcellular location is the cellular thylakoid membrane. This Parasynechococcus marenigrum (strain WH8102) protein is Photosystem II reaction center Psb28 protein.